Here is a 124-residue protein sequence, read N- to C-terminus: Fluoride-specific ion channel FluC (124 aa).

The next 4 helical transmembrane spans lie at 4 to 24, 35 to 55, 62 to 82, and 95 to 115; these read VLFV…ISLL, FGTL…FALG, PEFK…FSTF, and LVKA…VVYL. Positions 74 and 77 each coordinate Na(+).

It belongs to the fluoride channel Fluc/FEX (TC 1.A.43) family.

The protein resides in the cell inner membrane. It catalyses the reaction fluoride(in) = fluoride(out). Na(+) is not transported, but it plays an essential structural role and its presence is essential for fluoride channel function. Its function is as follows. Fluoride-specific ion channel. Important for reducing fluoride concentration in the cell, thus reducing its toxicity. This chain is Fluoride-specific ion channel FluC, found in Shewanella pealeana (strain ATCC 700345 / ANG-SQ1).